The sequence spans 366 residues: Chorismate synthase (366 aa).

Positions 48 and 54 each coordinate NADP(+). Residues 125–127 (RSS), 238–239 (NA), glycine 278, 293–297 (KPTSS), and arginine 319 contribute to the FMN site.

The protein belongs to the chorismate synthase family. As to quaternary structure, homotetramer. The cofactor is FMNH2.

The catalysed reaction is 5-O-(1-carboxyvinyl)-3-phosphoshikimate = chorismate + phosphate. It functions in the pathway metabolic intermediate biosynthesis; chorismate biosynthesis; chorismate from D-erythrose 4-phosphate and phosphoenolpyruvate: step 7/7. Functionally, catalyzes the anti-1,4-elimination of the C-3 phosphate and the C-6 proR hydrogen from 5-enolpyruvylshikimate-3-phosphate (EPSP) to yield chorismate, which is the branch point compound that serves as the starting substrate for the three terminal pathways of aromatic amino acid biosynthesis. This reaction introduces a second double bond into the aromatic ring system. The protein is Chorismate synthase of Burkholderia multivorans (strain ATCC 17616 / 249).